The following is a 272-amino-acid chain: D-aminoacyl-tRNA deacylase (272 aa).

This sequence belongs to the DtdA deacylase family. As to quaternary structure, monomer. The cofactor is Zn(2+).

The enzyme catalyses a D-aminoacyl-tRNA + H2O = a tRNA + a D-alpha-amino acid + H(+). The catalysed reaction is glycyl-tRNA(Ala) + H2O = tRNA(Ala) + glycine + H(+). Its function is as follows. D-aminoacyl-tRNA deacylase with broad substrate specificity. By recycling D-aminoacyl-tRNA to D-amino acids and free tRNA molecules, this enzyme counteracts the toxicity associated with the formation of D-aminoacyl-tRNA entities in vivo. The polypeptide is D-aminoacyl-tRNA deacylase (Thermococcus kodakarensis (strain ATCC BAA-918 / JCM 12380 / KOD1) (Pyrococcus kodakaraensis (strain KOD1))).